We begin with the raw amino-acid sequence, 501 residues long: Cobyric acid synthase (501 aa).

The GATase cobBQ-type domain occupies 252–443; it reads DLDVAVIDLD…LHGIFDNPYW (192 aa). C333 functions as the Nucleophile in the catalytic mechanism. H435 is an active-site residue.

Belongs to the CobB/CobQ family. CobQ subfamily.

The protein operates within cofactor biosynthesis; adenosylcobalamin biosynthesis. Functionally, catalyzes amidations at positions B, D, E, and G on adenosylcobyrinic A,C-diamide. NH(2) groups are provided by glutamine, and one molecule of ATP is hydrogenolyzed for each amidation. This Limosilactobacillus reuteri (strain DSM 20016) (Lactobacillus reuteri) protein is Cobyric acid synthase.